A 293-amino-acid polypeptide reads, in one-letter code: Protoheme IX farnesyltransferase (293 aa).

9 consecutive transmembrane segments (helical) span residues 9–29, 38–58, 86–106, 111–131, 137–157, 167–187, 211–231, 234–254, and 271–291; these read LIKP…FLLA, YIIL…SCVL, FVKN…LFLG, LLTI…YSLW, IYST…GYCT, WLLF…ITIF, IHMI…TVLG, SYTF…TGWY, and ILSI…SIFI.

This sequence belongs to the UbiA prenyltransferase family. Protoheme IX farnesyltransferase subfamily.

The protein localises to the cell inner membrane. It carries out the reaction heme b + (2E,6E)-farnesyl diphosphate + H2O = Fe(II)-heme o + diphosphate. It participates in porphyrin-containing compound metabolism; heme O biosynthesis; heme O from protoheme: step 1/1. Its function is as follows. Converts heme B (protoheme IX) to heme O by substitution of the vinyl group on carbon 2 of heme B porphyrin ring with a hydroxyethyl farnesyl side group. The protein is Protoheme IX farnesyltransferase of Blochmanniella floridana.